Consider the following 262-residue polypeptide: Cerebellar degeneration-related antigen 1 (262 aa).

34 consecutive repeat copies span residues 3–8 (WLEDVD), 9–14 (FLEDVP), 15–20 (LLEDIP), 21–26 (LLEDVP), 27–32 (LLEDVP), 33–38 (LLEDTS), 39–44 (RLEDIN), 45–50 (LMEDMA), 51–56 (LLEDVD), 57–62 (LLEDTD), 63–68 (FLEDLD), 69–74 (FSEAMD), 75–80 (LREDKD), 81–86 (FLEDMD), 87–92 (SLEDMA), 93–98 (LLEDVD), 99–104 (LLEDTD), 105–110 (FLEDPD), 111–116 (FLEAID), 117–122 (LREDKD), 123–128 (FLEDMD), 129–134 (SLEDLE), 135–140 (AIGRCG), 141–146 (FSGRHG), 147–152 (FFGRRR), 153–158 (FSGRPK), 159–164 (LSGRLG), 165–170 (LLGRRG), 171–176 (FSGRLG), 177–182 (GYWKTW), 183–188 (IFWKTW), 189–194 (IFWKTW), 195–200 (IFRKTY), and 201–206 (IGWKTW). Positions 3-140 (WLEDVDFLED…EDLEAIGRCG (138 aa)) are 23 X 6 AA approximate repeats. Positions 141-176 (FSGRHGFFGRRRFSGRPKLSGRLGLLGRRGFSGRLG) are 6 X 6 AA approximate repeats. Residues 177–206 (GYWKTWIFWKTWIFWKTWIFRKTYIGWKTW) are 5 X 6 AA approximate repeats.

As to expression, brain; predominantly expressed in normal neuroectodermal tissues and in certain malignant tumors.

In Homo sapiens (Human), this protein is Cerebellar degeneration-related antigen 1 (CDR1).